Consider the following 257-residue polypeptide: MSLLSKTRELNTLLQKHKGIAVDFKDVAQTISSVTVTNVFIVSRRGKILGSSLNELLKSQRIIQMLEERHIPSEYTERLMEVKQTESNIDIDNVLTVFPPENRELFIDSRTTIFPILGGGERLGTLVLGRVHDDFNENDLVLGEYAATVIGMEILREKHSEVEKEARDKAAITMAINSLSYSEKEAIEHIFEELGGTEGLLIASKVADGVGITRSVIVNALRKLESAGVIESRSLGMKGTFIKVKKEKFLDELEKSK.

Residues 1–155 (MSLLSKTREL…AATVIGMEIL (155 aa)) form a GAF domain region. The H-T-H motif DNA-binding region spans 203–222 (ASKVADGVGITRSVIVNALR).

Belongs to the CodY family.

Its subcellular location is the cytoplasm. In terms of biological role, DNA-binding global transcriptional regulator which is involved in the adaptive response to starvation and acts by directly or indirectly controlling the expression of numerous genes in response to nutrient availability. During rapid exponential growth, CodY is highly active and represses genes whose products allow adaptation to nutrient depletion. The polypeptide is Global transcriptional regulator CodY (Staphylococcus aureus (strain bovine RF122 / ET3-1)).